A 410-amino-acid polypeptide reads, in one-letter code: Cytochrome P450 105A3 (410 aa).

Cys-359 lines the heme pocket.

This sequence belongs to the cytochrome P450 family. In terms of assembly, monomer. It depends on heme as a cofactor.

Its function is as follows. Catalyzes the hydroxylation of sodium ML-236B carboxylate to pravastatin. The sequence is that of Cytochrome P450 105A3 (cyp105A3) from Streptomyces carbophilus.